We begin with the raw amino-acid sequence, 1186 residues long: Pesticidal crystal protein Cry14Aa (1186 aa).

The protein belongs to the delta endotoxin family.

Its function is as follows. Promotes colloidosmotic lysis by binding to the midgut epithelial cells of insects. In Bacillus thuringiensis subsp. sotto, this protein is Pesticidal crystal protein Cry14Aa (cry14Aa).